The primary structure comprises 332 residues: Biotin synthase (332 aa).

Residues 53-283 (WGKGGVHACS…VHPRKTIKFA (231 aa)) enclose the Radical SAM core domain. [4Fe-4S] cluster contacts are provided by cysteine 71, cysteine 75, and cysteine 78. [2Fe-2S] cluster is bound by residues cysteine 150, cysteine 211, and lysine 281.

Belongs to the radical SAM superfamily. Biotin synthase family. Homodimer. The cofactor is [4Fe-4S] cluster. Requires [2Fe-2S] cluster as cofactor.

The enzyme catalyses (4R,5S)-dethiobiotin + (sulfur carrier)-SH + 2 reduced [2Fe-2S]-[ferredoxin] + 2 S-adenosyl-L-methionine = (sulfur carrier)-H + biotin + 2 5'-deoxyadenosine + 2 L-methionine + 2 oxidized [2Fe-2S]-[ferredoxin]. It participates in cofactor biosynthesis; biotin biosynthesis; biotin from 7,8-diaminononanoate: step 2/2. Functionally, catalyzes the conversion of dethiobiotin (DTB) to biotin by the insertion of a sulfur atom into dethiobiotin via a radical-based mechanism. The protein is Biotin synthase of Chlorobium luteolum (strain DSM 273 / BCRC 81028 / 2530) (Pelodictyon luteolum).